The chain runs to 156 residues: Ribosomal RNA large subunit methyltransferase H (156 aa).

S-adenosyl-L-methionine is bound by residues Leu73, Gly104, and 123 to 128 (ISSMTL).

This sequence belongs to the RNA methyltransferase RlmH family. As to quaternary structure, homodimer.

It localises to the cytoplasm. It carries out the reaction pseudouridine(1915) in 23S rRNA + S-adenosyl-L-methionine = N(3)-methylpseudouridine(1915) in 23S rRNA + S-adenosyl-L-homocysteine + H(+). In terms of biological role, specifically methylates the pseudouridine at position 1915 (m3Psi1915) in 23S rRNA. The polypeptide is Ribosomal RNA large subunit methyltransferase H (Janthinobacterium sp. (strain Marseille) (Minibacterium massiliensis)).